Consider the following 1073-residue polypeptide: Serine/threonine-protein phosphatase 6 regulatory ankyrin repeat subunit C (1073 aa).

ANK repeat units follow at residues 7-36 (TDQP…NINV), 40-69 (ERRT…NVNA), 73-102 (VWLT…DVNA), 106-135 (YWQT…TVNV), 139-168 (TGRT…SLST), 172-201 (KDRQ…DVMC), 205-234 (KGYT…EIDE), 238-267 (FGNT…NVNQ), 271-301 (KGFT…DVNF), 305-334 (EGKS…EIDC), 338-367 (YGNT…DTAR), 371-400 (HDMF…LYSI), 422-451 (LGRT…DLRR), 455-484 (FGRT…SINE), 488-544 (KGCT…DPSL), 548-578 (QGYT…CLED), 583-612 (IPVS…NLDV), 616-645 (KGRT…SALV), 650-679 (RKWT…RADI), 686-715 (HGQT…TADA), 719-748 (RGRT…FVLC), 752-781 (KGRT…STDP), 789-818 (SGYS…FAYL), 821-851 (NPFT…KIVN), 856-885 (KGRT…EVDT), 889-919 (LGRT…NITV), 923-952 (NKNT…DLGL), and 959-988 (ALQM…TVLA).

In terms of assembly, protein phosphatase 6 (PP6) holoenzyme is proposed to be a heterotrimeric complex formed by the catalytic subunit, a SAPS domain-containing subunit (PP6R) and an ankyrin repeat-domain containing regulatory subunit (ARS).

Putative regulatory subunit of protein phosphatase 6 (PP6) that may be involved in the recognition of phosphoprotein substrates. This chain is Serine/threonine-protein phosphatase 6 regulatory ankyrin repeat subunit C (ANKRD52), found in Gallus gallus (Chicken).